A 1063-amino-acid chain; its full sequence is Structural polyprotein (1063 aa).

The segment at 23-131 (LRAELAAGAS…LGPPTNPFQA (109 aa)) is disordered. Residues 30–69 (GASQLRRPRPPRQRDSSTSGDDSGRDSGGPRRRRGNRGRG) form a human C1QBP/SF2P32-binding region. Ser46 bears the Phosphoserine; by host mark. A compositionally biased stretch (basic residues) spans 59–69 (PRRRRGNRGRG). Over residues 70–87 (QRKDWSKAPPPPEERQES) the composition is skewed to basic and acidic residues. Residues 93-107 (VPKPPRAPPQPPQPP) are compositionally biased toward pro residues. The cysteines at positions 153 and 197 are disulfide-linked. A functions as E2 signal peptide region spans residues 279-300 (GAPQVFLAGLLLAAVAVGTARA). The Extracellular portion of the chain corresponds to 301–534 (GLQPRTDIAA…LWLATANALS (234 aa)). A disordered region spans residues 305–327 (RTDIAAPPAPPQAPRAHGKHYGH). 4 N-linked (GlcNAc...) asparagine; by host glycosylation sites follow: Asn353, Asn371, Asn410, and Asn429. A helical transmembrane segment spans residues 535–555 (LDHALAAVVLLVPWVLIFMLC). Residues 556 to 582 (RRACRRRGAAAALTAVVLQGYNPPAYG) are Cytoplasmic-facing. The segment at 562 to 582 (RGAAAALTAVVLQGYNPPAYG) is functions as E1 signal peptide. Residues 583–1028 (EEAFTYLCTA…QTWAEWAAAH (446 aa)) are Extracellular-facing. Disulfide bonds link Cys590–Cys595, Cys619–Cys824, Cys641–Cys653, Cys699–Cys712, Cys758–Cys767, Cys807–Cys817, Cys931–Cys934, and Cys950–Cys983. A glycan (N-linked (GlcNAc...) asparagine; by host) is linked at Asn658. Residues Asn670 and Ala671 each contribute to the Ca(2+) site. Asp718 and Thr719 together coordinate Ca(2+). Residues Asn759 and Asn791 are each glycosylated (N-linked (GlcNAc...) asparagine; by host). O-linked (GalNAc...) threonine; by host glycans are attached at residues Thr1011 and Thr1012. Residues 1029 to 1049 (WWQLTLGAICALLLAGLLACC) form a helical membrane-spanning segment. The Extracellular segment spans residues 1050–1063 (AKCLYHLRGAIAPR).

In terms of assembly, homodimer; further assembles into homooligomer. Interacts with human C1QBP. Interacts (via N-terminus) with protease/methyltransferase p150. As to quaternary structure, heterodimer with spike glycoprotein E2. Heterodimer with spike glycoprotein E1. Structural polyprotein: Specific enzymatic cleavages in vivo yield mature proteins. Two signal peptidase-mediated cleavages within the polyprotein produce the structural proteins capsid, E2, and E1. The E2 signal peptide remains attached to the C-terminus of the capsid protein after cleavage by the signal peptidase. Another signal peptide at E2 C-terminus directs E1 to the ER, with a similar mechanism. Post-translationally, contains three N-linked oligosaccharides. In terms of processing, capsid is phosphorylated on Ser-46 by host. This phosphorylation negatively regulates capsid protein RNA-binding activity. Dephosphorylated by human PP1A.

It is found in the virion. The protein resides in the host cytoplasm. It localises to the host mitochondrion. The protein localises to the virion membrane. Its subcellular location is the host Golgi apparatus membrane. In terms of biological role, capsid protein interacts with genomic RNA and assembles into icosahedric core particles 65-70 nm in diameter. The resulting nucleocapsid eventually associates with the cytoplasmic domain of E2 at the cell membrane, leading to budding and formation of mature virions from host Golgi membranes. Phosphorylation negatively regulates RNA-binding activity, possibly delaying virion assembly during the viral replication phase. Capsid protein dimerizes and becomes disulfide-linked in the virion. Modulates genomic RNA replication. Modulates subgenomic RNA synthesis by interacting with human C1QBP/SF2P32. Induces both perinuclear clustering of mitochondria and the formation of electron-dense intermitochondrial plaques, both hallmarks of rubella virus infected cells. Induces apoptosis when expressed in transfected cells. Functionally, responsible for viral attachment to target host cell, by binding to the cell receptor. Its transport to the plasma membrane depends on interaction with E1 protein. The surface glycoproteins display an irregular helical organization and a pseudo-tetrameric inner nucleocapsid arrangement. Its function is as follows. Class II viral fusion protein. Fusion activity is inactive as long as E1 is bound to E2 in mature virion. After virus attachment to target cell and clathrin-mediated endocytosis, acidification of the endosome would induce dissociation of E1/E2 heterodimer and concomitant trimerization of the E1 subunits. This E1 homotrimer is fusion active, and promotes release of viral nucleocapsid in cytoplasm after endosome and viral membrane fusion. The cytoplasmic tail of spike glycoprotein E1 modulates virus release. The surface glycoproteins display an irregular helical organization and a pseudo-tetrameric inner nucleocapsid arrangement. The protein is Structural polyprotein of Homo sapiens (Human).